A 702-amino-acid chain; its full sequence is Elongation factor G (702 aa).

Positions 9–292 (DRTRNIGIMA…AVVDYLPSPL (284 aa)) constitute a tr-type G domain. Residues 18-25 (AHIDAGKT), 91-95 (DTPGH), and 145-148 (NKMD) each bind GTP.

The protein belongs to the TRAFAC class translation factor GTPase superfamily. Classic translation factor GTPase family. EF-G/EF-2 subfamily.

Its subcellular location is the cytoplasm. Its function is as follows. Catalyzes the GTP-dependent ribosomal translocation step during translation elongation. During this step, the ribosome changes from the pre-translocational (PRE) to the post-translocational (POST) state as the newly formed A-site-bound peptidyl-tRNA and P-site-bound deacylated tRNA move to the P and E sites, respectively. Catalyzes the coordinated movement of the two tRNA molecules, the mRNA and conformational changes in the ribosome. The sequence is that of Elongation factor G from Oenococcus oeni (strain ATCC BAA-331 / PSU-1).